The chain runs to 274 residues: NAD(P)H-quinone oxidoreductase subunit K, chloroplastic (274 aa).

2 stretches are compositionally biased toward polar residues: residues 1-10 (MVINQKNLSS) and 18-27 (SGSQSSTKAD). The segment at 1–27 (MVINQKNLSSPVAPYDKSGSQSSTKAD) is disordered. [4Fe-4S] cluster contacts are provided by Cys90, Cys91, Cys155, and Cys186.

The protein belongs to the complex I 20 kDa subunit family. As to quaternary structure, NDH is composed of at least 16 different subunits, 5 of which are encoded in the nucleus. The cofactor is [4Fe-4S] cluster.

Its subcellular location is the plastid. The protein resides in the chloroplast thylakoid membrane. It catalyses the reaction a plastoquinone + NADH + (n+1) H(+)(in) = a plastoquinol + NAD(+) + n H(+)(out). The enzyme catalyses a plastoquinone + NADPH + (n+1) H(+)(in) = a plastoquinol + NADP(+) + n H(+)(out). Its function is as follows. NDH shuttles electrons from NAD(P)H:plastoquinone, via FMN and iron-sulfur (Fe-S) centers, to quinones in the photosynthetic chain and possibly in a chloroplast respiratory chain. The immediate electron acceptor for the enzyme in this species is believed to be plastoquinone. Couples the redox reaction to proton translocation, and thus conserves the redox energy in a proton gradient. The sequence is that of NAD(P)H-quinone oxidoreductase subunit K, chloroplastic from Chlorokybus atmophyticus (Soil alga).